A 452-amino-acid chain; its full sequence is Pup--protein ligase (452 aa).

Glutamate 9 serves as a coordination point for Mg(2+). Residue arginine 53 coordinates ATP. Mg(2+) is bound at residue tyrosine 55. The active-site Proton acceptor is the aspartate 57. Position 63 (glutamate 63) interacts with Mg(2+). ATP contacts are provided by threonine 66 and tryptophan 419.

This sequence belongs to the Pup ligase/Pup deamidase family. Pup-conjugating enzyme subfamily.

It catalyses the reaction ATP + [prokaryotic ubiquitin-like protein]-L-glutamate + [protein]-L-lysine = ADP + phosphate + N(6)-([prokaryotic ubiquitin-like protein]-gamma-L-glutamyl)-[protein]-L-lysine.. It functions in the pathway protein degradation; proteasomal Pup-dependent pathway. It participates in protein modification; protein pupylation. Its function is as follows. Catalyzes the covalent attachment of the prokaryotic ubiquitin-like protein modifier Pup to the proteasomal substrate proteins, thereby targeting them for proteasomal degradation. This tagging system is termed pupylation. The ligation reaction involves the side-chain carboxylate of the C-terminal glutamate of Pup and the side-chain amino group of a substrate lysine. This chain is Pup--protein ligase, found in Mycolicibacterium gilvum (strain PYR-GCK) (Mycobacterium gilvum (strain PYR-GCK)).